A 67-amino-acid chain; its full sequence is Protein AaeX (67 aa).

The next 2 helical transmembrane spans lie at 10 to 30 (FGLS…LFFV) and 43 to 63 (FVWH…YLLF).

The protein belongs to the AaeX family.

It is found in the cell membrane. This chain is Protein AaeX, found in Pectobacterium atrosepticum (strain SCRI 1043 / ATCC BAA-672) (Erwinia carotovora subsp. atroseptica).